Consider the following 174-residue polypeptide: Probable phenolic acid decarboxylase (174 aa).

Belongs to the PadC family.

Catalyzes the decarboxylation of phenolic acids. The protein is Probable phenolic acid decarboxylase (padC) of Vibrio cholerae serotype O1 (strain ATCC 39315 / El Tor Inaba N16961).